The chain runs to 367 residues: UDP-N-acetylglucosamine--N-acetylmuramyl-(pentapeptide) pyrophosphoryl-undecaprenol N-acetylglucosamine transferase (367 aa).

Residues 11 to 13, Asn125, Arg163, Ser197, and Gln289 each bind UDP-N-acetyl-alpha-D-glucosamine; that span reads TAG.

The protein belongs to the glycosyltransferase 28 family. MurG subfamily.

It is found in the cell membrane. The catalysed reaction is di-trans,octa-cis-undecaprenyl diphospho-N-acetyl-alpha-D-muramoyl-L-alanyl-D-glutamyl-meso-2,6-diaminopimeloyl-D-alanyl-D-alanine + UDP-N-acetyl-alpha-D-glucosamine = di-trans,octa-cis-undecaprenyl diphospho-[N-acetyl-alpha-D-glucosaminyl-(1-&gt;4)]-N-acetyl-alpha-D-muramoyl-L-alanyl-D-glutamyl-meso-2,6-diaminopimeloyl-D-alanyl-D-alanine + UDP + H(+). Its pathway is cell wall biogenesis; peptidoglycan biosynthesis. Cell wall formation. Catalyzes the transfer of a GlcNAc subunit on undecaprenyl-pyrophosphoryl-MurNAc-pentapeptide (lipid intermediate I) to form undecaprenyl-pyrophosphoryl-MurNAc-(pentapeptide)GlcNAc (lipid intermediate II). This Clavibacter michiganensis subsp. michiganensis (strain NCPPB 382) protein is UDP-N-acetylglucosamine--N-acetylmuramyl-(pentapeptide) pyrophosphoryl-undecaprenol N-acetylglucosamine transferase.